The primary structure comprises 98 residues: Sec-independent protein translocase protein TatA (98 aa).

A helical transmembrane segment spans residues 1–21 (MGAMSPWHWAIVALVVVILFG). A disordered region spans residues 43-98 (VKEMQNDNSTPAPTAQSAPPPQSAPAELPVADTTTAPVTPPAPVQPQSQHTEPKSA). The span at 66-79 (APAELPVADTTTAP) shows a compositional bias: low complexity.

This sequence belongs to the TatA/E family. As to quaternary structure, the Tat system comprises two distinct complexes: a TatABC complex, containing multiple copies of TatA, TatB and TatC subunits, and a separate TatA complex, containing only TatA subunits. Substrates initially bind to the TatABC complex, which probably triggers association of the separate TatA complex to form the active translocon.

The protein localises to the cell membrane. Its function is as follows. Part of the twin-arginine translocation (Tat) system that transports large folded proteins containing a characteristic twin-arginine motif in their signal peptide across membranes. TatA could form the protein-conducting channel of the Tat system. This chain is Sec-independent protein translocase protein TatA, found in Rhodococcus erythropolis (Arthrobacter picolinophilus).